The chain runs to 367 residues: MIETIHVNLNNYSYNIYIGEYIFNNMFISSIFLKNKNNVLITNKKIEKKILKNKNQYFYKILNKIHYFSINDGENYKNLYEVEKIISFLLNNLYGRDLNLIALGGGVIGDITGFVASIFQRGVNFFQIPTTLLSQVDASIGGKTGVNHILGKNMIGSFWQPKGVFIDIKFLSTLPKKELLSGIAEIIKYAIVFDKIFFIWLENNLFKVLNLQKKELLYCIKKCCELKVKIIENDEKEIGNRVFLNLGHSFAHAIETFTGYGKWLHGNAVSVGIIMSSYLSFYLKYLKKSELLNIINIFNNIGLPIIGPSTMLPLDYLKLMMRDKKVINKNLRLVIPVSIGKVKLISSIKENILLDSITACQERRFFS.

NAD(+) contacts are provided by residues 72 to 77, 106 to 110, 130 to 131, Lys-143, Lys-152, and 170 to 173; these read DGENYK, GVIGD, TT, and FLST. 3 residues coordinate Zn(2+): Glu-185, His-248, and His-265.

It belongs to the sugar phosphate cyclases superfamily. Dehydroquinate synthase family. Requires Co(2+) as cofactor. It depends on Zn(2+) as a cofactor. The cofactor is NAD(+).

It localises to the cytoplasm. It carries out the reaction 7-phospho-2-dehydro-3-deoxy-D-arabino-heptonate = 3-dehydroquinate + phosphate. It functions in the pathway metabolic intermediate biosynthesis; chorismate biosynthesis; chorismate from D-erythrose 4-phosphate and phosphoenolpyruvate: step 2/7. Its function is as follows. Catalyzes the conversion of 3-deoxy-D-arabino-heptulosonate 7-phosphate (DAHP) to dehydroquinate (DHQ). This is 3-dehydroquinate synthase from Buchnera aphidicola subsp. Cinara cedri (strain Cc).